Here is a 1007-residue protein sequence, read N- to C-terminus: MAEAEEKRVGVGEARAPLAVEALRGKIVEKVKGNRVTLIVGDTGCGKSSMVPQFLLEENMEPILCTQPRRFAVVAIAQMIAESRNCQVGEEVGYHIGHSNVSNLNSKRSRIVFKTAGVVLEQMRDKGIAALNYKVIILDEIHERSVESDLVLACVKQFMMKKNDLRLILMSATADITRYKDYFRDLGRGERVEVIAIPSSPRSSIFQRKVLYLEQIVDILKMDSESLSTKYCSGPNTAADAGLKPDVYELIHRLLLHIHQNEPDIGKSILVFLPTYYALEQQWIRLLSASSMFKVHILHRSIDTDEALQTMKVSKSCRKVILATNIAESSVTIPGVAYVIDSCRSLQVYWDPIRKTDSAELVWVSKSQAEQRKGRTGRTCDGQIYRLVTGPFYNSLTDHEYPAILRLSLREQVLMICCAESRAMNDPHVLLQKVLDPPDSDVVEDALESLVQIRALDKPTSPRGRHEPTFYGCLLNSLPLSFDASVLALKFGDTGSICEGILISIMLDIQPLPIVQPFGHQQLCKMYRNNYFEEEGIDLQTGKKEAALVGNLCAFQFWQRMFKDKYRLDCLINVVNTHEPKASNGFVAKPEDEWCAFHNLVPTALNYISEIYDDIMGTLHRFRPSFLVKINPPMYLQPSEFHHMCLRHEVLELENVNSLPLEAENSHLDSHRRCAATPYVSPADFGTTTVVKTLKTLIKEMKTQSAADRVTYRELVHGYVQPALENEMCVFFLNGSCNRGDTCHFSHSSRAPRPICKFFLTLQGCRNGNSCSFSHDSGSLVSSSITSGICSQENRATSVCCKRLLPAAGDGHILVMNDKSLQFACKLCNYYDPTKIIACTPGPHSFESDSVTKGLKILQNLADPSYLFIGGEHKLSVPWTKLSRVFWFADIDSNESISEQVVLQKFFQHIAIKTLSEKMSDLQVIVIMNNAKFVQLQVERLARECFLFLGESFMFDEATLGWFSDTPNYPRGMQVSAPVAYIFSMHPPTGIQFGDYASELRKVLYSN.

Residues V28–V192 form the Helicase ATP-binding domain. G41 to S48 is an ATP binding site. A DEAH box motif is present at residues D139–H142. Positions L250–E420 constitute a Helicase C-terminal domain. 2 consecutive C3H1-type zinc fingers follow at residues A723–R750 and A751–G778.

The sequence is that of Zinc finger CCCH domain-containing protein 4 from Oryza sativa subsp. japonica (Rice).